The chain runs to 337 residues: Dihydroorotate dehydrogenase (quinone) (337 aa).

Residues 62-66 (AGLDK) and Thr-86 each bind FMN. Substrate is bound at residue Lys-66. Residue 111–115 (NRFGF) coordinates substrate. Residues Asn-139 and Asn-172 each contribute to the FMN site. Residue Asn-172 participates in substrate binding. The active-site Nucleophile is Ser-175. Asn-177 is a binding site for substrate. Residues Lys-217 and Thr-245 each contribute to the FMN site. Position 246 to 247 (246 to 247 (NT)) interacts with substrate. Residues Gly-268, Gly-297, and 318-319 (YS) contribute to the FMN site.

This sequence belongs to the dihydroorotate dehydrogenase family. Type 2 subfamily. As to quaternary structure, monomer. FMN is required as a cofactor.

The protein localises to the cell membrane. The catalysed reaction is (S)-dihydroorotate + a quinone = orotate + a quinol. Its pathway is pyrimidine metabolism; UMP biosynthesis via de novo pathway; orotate from (S)-dihydroorotate (quinone route): step 1/1. In terms of biological role, catalyzes the conversion of dihydroorotate to orotate with quinone as electron acceptor. In Methylobacillus flagellatus (strain ATCC 51484 / DSM 6875 / VKM B-1610 / KT), this protein is Dihydroorotate dehydrogenase (quinone).